We begin with the raw amino-acid sequence, 129 residues long: Small ribosomal subunit protein uS8 (129 aa).

It belongs to the universal ribosomal protein uS8 family. Part of the 30S ribosomal subunit. Contacts proteins S5 and S12.

Its function is as follows. One of the primary rRNA binding proteins, it binds directly to 16S rRNA central domain where it helps coordinate assembly of the platform of the 30S subunit. This is Small ribosomal subunit protein uS8 from Dichelobacter nodosus (strain VCS1703A).